Consider the following 340-residue polypeptide: S-adenosylmethionine:tRNA ribosyltransferase-isomerase (340 aa).

The protein belongs to the QueA family. In terms of assembly, monomer.

It localises to the cytoplasm. It carries out the reaction 7-aminomethyl-7-carbaguanosine(34) in tRNA + S-adenosyl-L-methionine = epoxyqueuosine(34) in tRNA + adenine + L-methionine + 2 H(+). It functions in the pathway tRNA modification; tRNA-queuosine biosynthesis. Functionally, transfers and isomerizes the ribose moiety from AdoMet to the 7-aminomethyl group of 7-deazaguanine (preQ1-tRNA) to give epoxyqueuosine (oQ-tRNA). The polypeptide is S-adenosylmethionine:tRNA ribosyltransferase-isomerase (Macrococcus caseolyticus (strain JCSC5402) (Macrococcoides caseolyticum)).